We begin with the raw amino-acid sequence, 337 residues long: Protein RecA (337 aa).

66–73 (GPESSGKT) is an ATP binding site.

This sequence belongs to the RecA family.

It is found in the cytoplasm. Can catalyze the hydrolysis of ATP in the presence of single-stranded DNA, the ATP-dependent uptake of single-stranded DNA by duplex DNA, and the ATP-dependent hybridization of homologous single-stranded DNAs. It interacts with LexA causing its activation and leading to its autocatalytic cleavage. The chain is Protein RecA from Mesomycoplasma hyopneumoniae (strain J / ATCC 25934 / NCTC 10110) (Mycoplasma hyopneumoniae).